The chain runs to 349 residues: Sensory histidine kinase/phosphatase NtrB (349 aa).

The 74-residue stretch at 5–78 folds into the PAS domain; the sequence is TLPDAGQILN…SLAAGQGFTD (74 aa). A Histidine kinase domain is found at 136 to 349; the sequence is GLAHEIKNPL…EFSVYLPIRK (214 aa). Residue His139 is modified to Phosphohistidine; by autocatalysis. Lys329 provides a ligand contact to ATP.

In terms of processing, autophosphorylated.

It localises to the cytoplasm. The enzyme catalyses ATP + protein L-histidine = ADP + protein N-phospho-L-histidine.. In terms of biological role, member of the two-component regulatory system NtrB/NtrC, which controls expression of the nitrogen-regulated (ntr) genes in response to nitrogen limitation. Under conditions of nitrogen limitation, NtrB autophosphorylates and transfers the phosphoryl group to NtrC. In the presence of nitrogen, acts as a phosphatase that dephosphorylates and inactivates NtrC. This is Sensory histidine kinase/phosphatase NtrB (ntrB) from Klebsiella oxytoca.